The following is a 176-amino-acid chain: 4-hydroxylaminobenzoate lyase (176 aa).

It belongs to the PnbB family.

It catalyses the reaction 4-hydroxylaminobenzoate + H2O + H(+) = 3,4-dihydroxybenzoate + NH4(+). Functionally, lyase involved in the degradation of nitroaromatic compounds. Catalyzes the conversion of 4-hydroxylaminobenzoate to 3,4-dihydroxybenzoate (protocatechuate). Required for the catabolism of 4-nitrotoluene. The sequence is that of 4-hydroxylaminobenzoate lyase from Pseudomonas putida (Arthrobacter siderocapsulatus).